The chain runs to 529 residues: Bifunctional purine biosynthesis protein PurH (529 aa).

Residues 1 to 148 (MQQRRPIRRA…KNHKDVAIVV (148 aa)) enclose the MGS-like domain.

Belongs to the PurH family.

The enzyme catalyses (6R)-10-formyltetrahydrofolate + 5-amino-1-(5-phospho-beta-D-ribosyl)imidazole-4-carboxamide = 5-formamido-1-(5-phospho-D-ribosyl)imidazole-4-carboxamide + (6S)-5,6,7,8-tetrahydrofolate. The catalysed reaction is IMP + H2O = 5-formamido-1-(5-phospho-D-ribosyl)imidazole-4-carboxamide. It functions in the pathway purine metabolism; IMP biosynthesis via de novo pathway; 5-formamido-1-(5-phospho-D-ribosyl)imidazole-4-carboxamide from 5-amino-1-(5-phospho-D-ribosyl)imidazole-4-carboxamide (10-formyl THF route): step 1/1. It participates in purine metabolism; IMP biosynthesis via de novo pathway; IMP from 5-formamido-1-(5-phospho-D-ribosyl)imidazole-4-carboxamide: step 1/1. The sequence is that of Bifunctional purine biosynthesis protein PurH from Yersinia enterocolitica serotype O:8 / biotype 1B (strain NCTC 13174 / 8081).